The following is an 85-amino-acid chain: Small ribosomal subunit protein uS17 (85 aa).

It belongs to the universal ribosomal protein uS17 family. Part of the 30S ribosomal subunit.

One of the primary rRNA binding proteins, it binds specifically to the 5'-end of 16S ribosomal RNA. The polypeptide is Small ribosomal subunit protein uS17 (Pasteurella multocida (strain Pm70)).